Here is a 322-residue protein sequence, read N- to C-terminus: Acetyl-coenzyme A carboxylase carboxyl transferase subunit alpha (322 aa).

A CoA carboxyltransferase C-terminal domain is found at 43–297 (ALKSKSNALT…KEVLTQQLNK (255 aa)).

Belongs to the AccA family. As to quaternary structure, acetyl-CoA carboxylase is a heterohexamer composed of biotin carboxyl carrier protein (AccB), biotin carboxylase (AccC) and two subunits each of ACCase subunit alpha (AccA) and ACCase subunit beta (AccD).

The protein resides in the cytoplasm. The catalysed reaction is N(6)-carboxybiotinyl-L-lysyl-[protein] + acetyl-CoA = N(6)-biotinyl-L-lysyl-[protein] + malonyl-CoA. It functions in the pathway lipid metabolism; malonyl-CoA biosynthesis; malonyl-CoA from acetyl-CoA: step 1/1. Component of the acetyl coenzyme A carboxylase (ACC) complex. First, biotin carboxylase catalyzes the carboxylation of biotin on its carrier protein (BCCP) and then the CO(2) group is transferred by the carboxyltransferase to acetyl-CoA to form malonyl-CoA. This Vesicomyosocius okutanii subsp. Calyptogena okutanii (strain HA) protein is Acetyl-coenzyme A carboxylase carboxyl transferase subunit alpha.